The sequence spans 401 residues: Imidazolonepropionase (401 aa).

Fe(3+) contacts are provided by His-66 and His-68. Residues His-66 and His-68 each contribute to the Zn(2+) site. Residues Arg-75, Tyr-138, and His-171 each contribute to the 4-imidazolone-5-propanoate site. Position 138 (Tyr-138) interacts with N-formimidoyl-L-glutamate. His-236 is a Fe(3+) binding site. Residue His-236 coordinates Zn(2+). Residue Gln-239 coordinates 4-imidazolone-5-propanoate. Asp-311 lines the Fe(3+) pocket. A Zn(2+)-binding site is contributed by Asp-311. Positions 313 and 315 each coordinate N-formimidoyl-L-glutamate. Thr-316 serves as a coordination point for 4-imidazolone-5-propanoate.

The protein belongs to the metallo-dependent hydrolases superfamily. HutI family. It depends on Zn(2+) as a cofactor. The cofactor is Fe(3+).

Its subcellular location is the cytoplasm. The enzyme catalyses 4-imidazolone-5-propanoate + H2O = N-formimidoyl-L-glutamate. Its pathway is amino-acid degradation; L-histidine degradation into L-glutamate; N-formimidoyl-L-glutamate from L-histidine: step 3/3. In terms of biological role, catalyzes the hydrolytic cleavage of the carbon-nitrogen bond in imidazolone-5-propanoate to yield N-formimidoyl-L-glutamate. It is the third step in the universal histidine degradation pathway. The protein is Imidazolonepropionase of Acinetobacter baumannii (strain ACICU).